The sequence spans 316 residues: Ribosomal RNA large subunit methyltransferase F (316 aa).

The protein belongs to the methyltransferase superfamily. METTL16/RlmF family.

The protein localises to the cytoplasm. It catalyses the reaction adenosine(1618) in 23S rRNA + S-adenosyl-L-methionine = N(6)-methyladenosine(1618) in 23S rRNA + S-adenosyl-L-homocysteine + H(+). Functionally, specifically methylates the adenine in position 1618 of 23S rRNA. The protein is Ribosomal RNA large subunit methyltransferase F of Pseudomonas putida (strain W619).